We begin with the raw amino-acid sequence, 305 residues long: DNA-directed RNA polymerase 35 kDa subunit (305 aa).

Belongs to the poxviridae DNA-directed RNA polymerase 35 kDa subunit family. The DNA-dependent RNA polymerase used for intermediate and late genes expression consists of eight subunits 147 kDa, 133 kDa, 35 kDa, 30 kDa, 22 kDa, 19 kDa, 18 kDa and 7 kDa totalling more than 500 kDa in mass. The same holoenzyme, with the addition of the transcription-specificity factor RAP94, is used for early gene expression.

The protein resides in the virion. The enzyme catalyses RNA(n) + a ribonucleoside 5'-triphosphate = RNA(n+1) + diphosphate. Functionally, part of the DNA-dependent RNA polymerase which catalyzes the transcription of viral DNA into RNA using the four ribonucleoside triphosphates as substrates. Responsible for the transcription of early, intermediate and late genes. DNA-dependent RNA polymerase associates with the early transcription factor (ETF) thereby allowing the early genes transcription. Late transcription, and probably also intermediate transcription, require newly synthesized RNA polymerase. This Rabbitpox virus (strain Utrecht) (RPV) protein is DNA-directed RNA polymerase 35 kDa subunit (RPO35).